We begin with the raw amino-acid sequence, 410 residues long: Multifunctional CCA protein (410 aa).

The ATP site is built by glycine 8 and arginine 11. Residues glycine 8 and arginine 11 each coordinate CTP. The Mg(2+) site is built by glutamate 21 and aspartate 23. Arginine 91, arginine 137, and arginine 140 together coordinate ATP. Positions 91, 137, and 140 each coordinate CTP. Residues 228–329 (TGIHSLMALR…VKLLEQVDAF (102 aa)) enclose the HD domain.

The protein belongs to the tRNA nucleotidyltransferase/poly(A) polymerase family. Bacterial CCA-adding enzyme type 1 subfamily. Monomer. Can also form homodimers and oligomers. Mg(2+) serves as cofactor. Requires Ni(2+) as cofactor.

It carries out the reaction a tRNA precursor + 2 CTP + ATP = a tRNA with a 3' CCA end + 3 diphosphate. The enzyme catalyses a tRNA with a 3' CCA end + 2 CTP + ATP = a tRNA with a 3' CCACCA end + 3 diphosphate. Catalyzes the addition and repair of the essential 3'-terminal CCA sequence in tRNAs without using a nucleic acid template. Adds these three nucleotides in the order of C, C, and A to the tRNA nucleotide-73, using CTP and ATP as substrates and producing inorganic pyrophosphate. tRNA 3'-terminal CCA addition is required both for tRNA processing and repair. Also involved in tRNA surveillance by mediating tandem CCA addition to generate a CCACCA at the 3' terminus of unstable tRNAs. While stable tRNAs receive only 3'-terminal CCA, unstable tRNAs are marked with CCACCA and rapidly degraded. This chain is Multifunctional CCA protein, found in Legionella pneumophila (strain Paris).